We begin with the raw amino-acid sequence, 903 residues long: Immunoglobulin superfamily member 22 (903 aa).

Ig-like domains lie at 67–158 (PEFV…LLVT), 232–322 (EAIR…AELT), 418–508 (PIKF…AIVT), and 606–696 (PSVL…LHLS). 2 consecutive Fibronectin type-III domains span residues 703–798 (FASQ…AKDP) and 804–898 (LVQD…MPPP).

This is Immunoglobulin superfamily member 22 (IGSF22) from Homo sapiens (Human).